The sequence spans 387 residues: Pepsin-3 (387 aa).

The first 15 residues, 1–15 (MKWLLLLGLLALSEC), serve as a signal peptide directing secretion. Residues 16-59 (IIHKVPLVRKKSLRKNLIEKGLLKDYLKTHTPNLATKYLPKAAF) constitute a propeptide, activation peptide. The Peptidase A1 domain maps to 75–384 (YFGTIGIGTP…DRANNQLGLA (310 aa)). Asp-93 is an active-site residue. 2 disulfide bridges follow: Cys-106–Cys-111 and Cys-267–Cys-271. Asp-276 is a catalytic residue. An intrachain disulfide couples Cys-310 to Cys-343.

This sequence belongs to the peptidase A1 family.

Its subcellular location is the secreted. The enzyme catalyses Preferential cleavage: hydrophobic, preferably aromatic, residues in P1 and P1' positions. Cleaves 1-Phe-|-Val-2, 4-Gln-|-His-5, 13-Glu-|-Ala-14, 14-Ala-|-Leu-15, 15-Leu-|-Tyr-16, 16-Tyr-|-Leu-17, 23-Gly-|-Phe-24, 24-Phe-|-Phe-25 and 25-Phe-|-Tyr-26 bonds in the B chain of insulin.. Shows particularly broad specificity; although bonds involving phenylalanine and leucine are preferred, many others are also cleaved to some extent. The protein is Pepsin-3 of Oryctolagus cuniculus (Rabbit).